Reading from the N-terminus, the 262-residue chain is uncharacterized protein (262 aa).

It belongs to the glycosyltransferase 2 family.

This is an uncharacterized protein from Mycobacterium tuberculosis (strain CDC 1551 / Oshkosh).